Here is a 964-residue protein sequence, read N- to C-terminus: DNA mismatch repair protein MSH2 (964 aa).

688–695 is a binding site for ATP; sequence GPNMGGKS. An interaction with MSH6 region spans residues 851 to 964; that stretch reads DQSFGIHVAE…YLKYIKALLL (114 aa).

This sequence belongs to the DNA mismatch repair MutS family. In terms of assembly, heterodimer consisting of MSH2-MSH6 (MutS alpha) or MSH2-MSH3 (MutS beta). Both heterodimers form a ternary complex with MutL alpha (MLH1-PMS1). MutS beta also forms a ternary complex with MutL beta (MLH1-MLH3), and possibly with a MLH1-MLH2 heterodimer. Both heterodimers interact with proliferating cell nuclear antigen (PCNA/POL30). This interaction is disrupted upon binding of the MutS heterodimers to mismatch DNA. Interacts with SAW1.

The protein localises to the nucleus. Its activity is regulated as follows. Inhibited by Cd(2+). In terms of biological role, component of the post-replicative DNA mismatch repair system (MMR). Forms two different heterodimers: MutS alpha (MSH2-MSH6 heterodimer) and MutS beta (MSH2-MSH3 heterodimer), which bind to DNA mismatches thereby initiating DNA repair. MSH2 seems to act as a scaffold for the other MutS homologs that provide substrate-binding and substrate specificity. When bound, heterodimers bend the DNA helix and shield approximately 20 base pairs. MutS alpha acts mainly to repair base-base and single insertion-deletion mismatches that occur during replication, but can also repair longer insertion-deletion loops (IDLs), although with decreasing efficiency as the size of the extrahelical loop increases. MutS beta acts mainly to repair IDLs from 2 to 13 nucleotides in size, but can also repair base-base and single insertion-deletion mismatches. After mismatch binding, MutS alpha or beta form a ternary complex with a MutL heterodimer, which is thought to be responsible for directing the downstream MMR events, including strand discrimination, excision, and resynthesis. ATP binding and hydrolysis play a pivotal role in mismatch repair functions. Both subunits bind ATP, but with differing affinities, and their ATPase kinetics are also very different. MSH6 binds and hydrolyzes ATP rapidly, whereas MSH2 catalyzes ATP at a substantially slower rate. Binding to a mismatched base pair suppresses MSH6-catalyzed ATP hydrolysis, but not the activity of MSH2. ATP binding to both subunits is necessary to trigger a change in MutS alpha interaction with mismatched DNA, converting MutS alpha into a sliding clamp capable of hydrolysis-independent movement along DNA, and also facilitates formation of ternary complexes containing MutS and MutL proteins and the mismatch. MutS beta also has a role in regulation of heteroduplex formation during mitotic and meiotic recombination. MutS beta binds to DNA flap structures predicted to form during recombination, and is required for 3' non-homologous tail removal (NHTR). MutS beta-binding alters the DNA conformation of its substrate at the ds/ssDNA junction and may facilitate its recognition and/or cleavage by the downstream nucleotide excision repair (NER) RAD1-RAD10 endonuclease. This chain is DNA mismatch repair protein MSH2 (MSH2), found in Saccharomyces cerevisiae (strain ATCC 204508 / S288c) (Baker's yeast).